A 91-amino-acid polypeptide reads, in one-letter code: MSRTVFCHYQQSDAEGLDFVPYPGELGQRIFAQIGKNAWQAWLAHQTMLINENRLSPRDPKHRAFLEAELQKFLFERNADKPEGYVAPVGD.

It belongs to the Fe(2+)-trafficking protein family.

In terms of biological role, could be a mediator in iron transactions between iron acquisition and iron-requiring processes, such as synthesis and/or repair of Fe-S clusters in biosynthetic enzymes. This is Probable Fe(2+)-trafficking protein from Xanthomonas axonopodis pv. citri (strain 306).